The chain runs to 377 residues: MTDSPVLALAKELISRQSVTPADAGCQDLMIERLKALGFEIESMVFEDTTNFWARRGTQSPLFVFAGHTDVVPAGPLSQWHTPPFEPTVIDGFLHGRGAADMKGSLACMIVAVERFIAEHPDHQGSIGFLITSDEEGPFINGTVRVVETLMARNELIDMCIVGEPSSTLAVGDVVKNGRRGSITGDLKVKGTQGHVAYPHLANNPVHKALPALAELAATQWDEGNAYFPPTSFQIPNLQAGTGASNVIPGEFDVQFNFRFSTELTDEEIKRRVHSVLDAHGLDYDVKWTLSGQPFLTDTGELLAAVVAAVEEVNHQAPALLTTGGTSDGRFIAQMGAQVVELGPVNATIHKVNECVRIADLEKLTDMYQKTLNHLLG.

A Zn(2+)-binding site is contributed by histidine 68. Aspartate 70 is a catalytic residue. Aspartate 101 lines the Zn(2+) pocket. The active-site Proton acceptor is glutamate 135. Residues glutamate 136, glutamate 164, and histidine 350 each coordinate Zn(2+).

Belongs to the peptidase M20A family. DapE subfamily. In terms of assembly, homodimer. It depends on Zn(2+) as a cofactor.

The catalysed reaction is N-succinyl-(2S,6S)-2,6-diaminopimelate + H2O = (2S,6S)-2,6-diaminopimelate + succinate. Its pathway is amino-acid biosynthesis; L-lysine biosynthesis via DAP pathway; LL-2,6-diaminopimelate from (S)-tetrahydrodipicolinate (succinylase route): step 3/3. Its function is as follows. Catalyzes the hydrolysis of N-succinyl-L,L-diaminopimelic acid (SDAP), forming succinate and LL-2,6-diaminopimelate (DAP), an intermediate involved in the bacterial biosynthesis of lysine and meso-diaminopimelic acid, an essential component of bacterial cell walls. The sequence is that of Succinyl-diaminopimelate desuccinylase (dapE) from Vibrio cholerae serotype O1 (strain ATCC 39315 / El Tor Inaba N16961).